Here is a 108-residue protein sequence, read N- to C-terminus: U-scoloptoxin(16)-Sm1a (108 aa).

The signal sequence occupies residues 1-19; that stretch reads MNLFLVLFVFSFSVSQFFA.

It belongs to the scoloptoxin-16 family. Post-translationally, contains 4 disulfide bonds. Expressed by the venom gland.

It localises to the secreted. The chain is U-scoloptoxin(16)-Sm1a from Scolopendra morsitans (Tanzanian blue ringleg centipede).